The sequence spans 462 residues: Glycine--tRNA ligase (462 aa).

2 residues coordinate substrate: R98 and E174. ATP-binding positions include 206–208, 216–221, 290–291, and 334–337; these read RNE, FRTREF, EL, and GADR. Residue 221 to 225 participates in substrate binding; sequence FEQME. Residue 330–334 coordinates substrate; sequence EPSLG.

Belongs to the class-II aminoacyl-tRNA synthetase family. In terms of assembly, homodimer.

The protein resides in the cytoplasm. It carries out the reaction tRNA(Gly) + glycine + ATP = glycyl-tRNA(Gly) + AMP + diphosphate. Functionally, catalyzes the attachment of glycine to tRNA(Gly). This is Glycine--tRNA ligase from Lachnospira eligens (strain ATCC 27750 / DSM 3376 / VPI C15-48 / C15-B4) (Eubacterium eligens).